The primary structure comprises 890 residues: Tyrosine-protein kinase receptor TYRO3 (890 aa).

Residues 1–40 (MALRRSMGRPGLPPLPLPPPPRLGLLLAALASLLLPESAA) form the signal peptide. Ig-like C2-type domains follow at residues 41–128 (AGLK…TEIS) and 139–220 (PFFT…ATVH). Over 41–429 (AGLKLMGAPV…QGPPHSRTSW (389 aa)) the chain is Extracellular. The N-linked (GlcNAc...) asparagine glycan is linked to N63. Intrachain disulfides connect C64–C117 and C160–C203. N-linked (GlcNAc...) asparagine glycans are attached at residues N191, N230, N240, N293, N366, and N380. Fibronectin type-III domains are found at residues 227-320 (APFN…TKGL) and 325-416 (APQN…SHDR). A helical membrane pass occupies residues 430–450 (VPVVLGVLTALVTAAALALIL). The Cytoplasmic segment spans residues 451-890 (LRKRRKETRF…QQGLLPHSSC (440 aa)). Phosphoserine is present on S466. In terms of domain architecture, Protein kinase spans 518–790 (FTLGRMLGKG…CLRMELENIL (273 aa)). ATP-binding positions include 524–532 (LGKGEFGSV) and K550. The active-site Proton acceptor is the D655. Phosphotyrosine; by autocatalysis is present on residues Y681, Y685, Y686, and Y804. 2 disordered regions span residues 815 to 837 (AGGS…GSGM) and 851 to 871 (LTPG…ESPL). S818 and S869 each carry phosphoserine.

It belongs to the protein kinase superfamily. Tyr protein kinase family. AXL/UFO subfamily. In terms of assembly, monomer and homodimer. Interacts (via N-terminus) with extracellular ligands TULP1 and GAS6. Interacts with PIK3R1; this interaction increases PI3-kinase activity. In terms of processing, autophosphorylated. In terms of tissue distribution, abundant in the brain and lower levels in other tissues.

The protein localises to the cell membrane. The enzyme catalyses L-tyrosyl-[protein] + ATP = O-phospho-L-tyrosyl-[protein] + ADP + H(+). In terms of biological role, receptor tyrosine kinase that transduces signals from the extracellular matrix into the cytoplasm by binding to several ligands including TULP1 or GAS6. Regulates many physiological processes including cell survival, migration and differentiation. Ligand binding at the cell surface induces dimerization and autophosphorylation of TYRO3 on its intracellular domain that provides docking sites for downstream signaling molecules. Following activation by ligand, interacts with PIK3R1 and thereby enhances PI3-kinase activity. Activates the AKT survival pathway, including nuclear translocation of NF-kappa-B and up-regulation of transcription of NF-kappa-B-regulated genes. TYRO3 signaling plays a role in various processes such as neuron protection from excitotoxic injury, platelet aggregation and cytoskeleton reorganization. Also plays an important role in inhibition of Toll-like receptors (TLRs)-mediated innate immune response by activating STAT1, which selectively induces production of suppressors of cytokine signaling SOCS1 and SOCS3. (Microbial infection) Acts as a receptor for lassa virus and lymphocytic choriomeningitis virus, possibly through GAS6 binding to phosphatidyl-serine at the surface of virion envelope. Functionally, (Microbial infection) Acts as a receptor for Ebolavirus, possibly through GAS6 binding to phosphatidyl-serine at the surface of virion envelope. This chain is Tyrosine-protein kinase receptor TYRO3 (TYRO3), found in Homo sapiens (Human).